A 305-amino-acid polypeptide reads, in one-letter code: Tyrosine recombinase XerC (305 aa).

A Core-binding (CB) domain is found at 4–95 (TSIQALINKW…AVKNFYRFLE (92 aa)). Residues 116–298 (LLPKALSEDD…SIKHLEAVYT (183 aa)) enclose the Tyr recombinase domain. Residues Arg-159, Lys-182, His-250, Arg-253, and His-276 contribute to the active site. Residue Tyr-285 is the O-(3'-phospho-DNA)-tyrosine intermediate of the active site.

The protein belongs to the 'phage' integrase family. XerC subfamily. In terms of assembly, forms a cyclic heterotetrameric complex composed of two molecules of XerC and two molecules of XerD.

It localises to the cytoplasm. In terms of biological role, site-specific tyrosine recombinase, which acts by catalyzing the cutting and rejoining of the recombining DNA molecules. The XerC-XerD complex is essential to convert dimers of the bacterial chromosome into monomers to permit their segregation at cell division. It also contributes to the segregational stability of plasmids. In Rickettsia massiliae (strain Mtu5), this protein is Tyrosine recombinase XerC.